The chain runs to 183 residues: Tumor necrosis factor ligand superfamily member 4 (183 aa).

Residues 1–23 are Cytoplasmic-facing; that stretch reads MERVQPLEENVGNAARPRFERNK. A helical; Signal-anchor for type II membrane protein membrane pass occupies residues 24–50; it reads LLLVASVIQGLGLLLCFTYICLHFSAL. The THD domain occupies 51–173; sequence QVSHRYPRIQ…HVNGGELILI (123 aa). At 51 to 183 the chain is on the extracellular side; the sequence is QVSHRYPRIQ…HQNPGEFCVL (133 aa). Asn90, Asn114, Asn152, and Asn157 each carry an N-linked (GlcNAc...) asparagine glycan. A disulfide bridge links Cys97 with Cys181.

This sequence belongs to the tumor necrosis factor family. In terms of assembly, homotrimer.

The protein resides in the membrane. Functionally, cytokine that binds to TNFRSF4. Co-stimulates T-cell proliferation and cytokine production. The polypeptide is Tumor necrosis factor ligand superfamily member 4 (TNFSF4) (Homo sapiens (Human)).